Consider the following 89-residue polypeptide: Venom peptide BmKAPI (89 aa).

Positions 1–22 are cleaved as a signal peptide; the sequence is MKFVFASFALFVIFLCFSQSLS. Intrachain disulfides connect Cys28-Cys66, Cys37-Cys62, Cys41-Cys55, Cys46-Cys86, and Cys68-Cys80. Positions 28–86 constitute a TIL domain; the sequence is CRDNEVFDNCISNCGPPRCSNILNTYPCTNLGPLCTPGCKCKDGRVYDNQGRCVLQTEC.

This sequence belongs to the serine protease inhibitor-like (TIL domain-containing) family. As to expression, expressed by the venom gland.

The protein resides in the secreted. Its function is as follows. Serine protease inhibitor. The sequence is that of Venom peptide BmKAPI from Olivierus martensii (Manchurian scorpion).